A 648-amino-acid polypeptide reads, in one-letter code: Nucleoside triphosphatase I (648 aa).

Residues 48–213 enclose the Helicase ATP-binding domain; the sequence is FIGLKNLNSM…NNLIGLLRPN (166 aa). Position 61-68 (61-68) interacts with ATP; that stretch reads WDTGTGKT. A DEXH box motif is present at residues 151–154; the sequence is DEVH. The Helicase C-terminal domain maps to 379-542; it reads YIEACRIILN…KINVVFDLLK (164 aa). The segment at 468 to 534 is binding to the cap-specific mRNA (nucleoside-2'-O-)-methyltransferase; that stretch reads DIIILDMPWN…DIIKNKQGKI (67 aa).

This sequence belongs to the helicase family. NPH I subfamily. As to quaternary structure, monomer. Interacts (via C-terminus) with RAP94 (via N-terminus). Interacts with the cap-specific mRNA (nucleoside-2'-O-)-methyltransferase.

The protein localises to the virion. It catalyses the reaction a ribonucleoside 5'-triphosphate + H2O = a ribonucleoside 5'-diphosphate + phosphate + H(+). In terms of biological role, DNA-dependent ATPase required for providing the needed energy to achieve the termination of early transcripts. Acts in concert with the RAP94 subunit of the virion RNA polymerase and the capping enzyme/VTF to catalyze release of UUUUUNU-containing nascent RNA from the elongation complex. NPH-I must bind ssDNA in order to exhibit ATPase activity. This is Nucleoside triphosphatase I (NPH1) from Choristoneura fumiferana (Spruce budworm moth).